We begin with the raw amino-acid sequence, 37 residues long: MKVRPSVKPICEKCKVIRRKGKVMVICENPKHKQKQG.

Belongs to the bacterial ribosomal protein bL36 family.

This is Large ribosomal subunit protein bL36 from Bacillus pumilus (strain SAFR-032).